We begin with the raw amino-acid sequence, 100 residues long: NADH-quinone oxidoreductase subunit K (100 aa).

Transmembrane regions (helical) follow at residues 4–24 (LSWY…GFVI), 29–49 (IVML…FASF), and 60–80 (IFVL…LAIV).

The protein belongs to the complex I subunit 4L family. As to quaternary structure, NDH-1 is composed of 14 different subunits. Subunits NuoA, H, J, K, L, M, N constitute the membrane sector of the complex.

The protein localises to the cell inner membrane. It carries out the reaction a quinone + NADH + 5 H(+)(in) = a quinol + NAD(+) + 4 H(+)(out). Functionally, NDH-1 shuttles electrons from NADH, via FMN and iron-sulfur (Fe-S) centers, to quinones in the respiratory chain. The immediate electron acceptor for the enzyme in this species is believed to be ubiquinone. Couples the redox reaction to proton translocation (for every two electrons transferred, four hydrogen ions are translocated across the cytoplasmic membrane), and thus conserves the redox energy in a proton gradient. This Thermodesulfovibrio yellowstonii (strain ATCC 51303 / DSM 11347 / YP87) protein is NADH-quinone oxidoreductase subunit K.